We begin with the raw amino-acid sequence, 263 residues long: tRNA pseudouridine synthase A (263 aa).

Asp57 acts as the Nucleophile in catalysis. Tyr115 provides a ligand contact to substrate.

The protein belongs to the tRNA pseudouridine synthase TruA family. Homodimer.

It catalyses the reaction uridine(38/39/40) in tRNA = pseudouridine(38/39/40) in tRNA. Functionally, formation of pseudouridine at positions 38, 39 and 40 in the anticodon stem and loop of transfer RNAs. The chain is tRNA pseudouridine synthase A from Buchnera aphidicola subsp. Schizaphis graminum (strain Sg).